A 499-amino-acid chain; its full sequence is Endoglucanase (499 aa).

The signal sequence occupies residues 1-29 (MKRSISIFITCLLITLLTMGGMIASPASA). Substrate is bound by residues His-65, 69 to 70 (WY), Tyr-96, and His-131. Glu-169 acts as the Proton donor in catalysis. Tyr-231 contacts substrate. Glu-257 serves as the catalytic Nucleophile. Substrate contacts are provided by residues 263–264 (AS), Trp-291, and 296–298 (KQE). One can recognise a CBM3 domain in the interval 350–499 (QENGISVQYR…GKLIWGTEPN (150 aa)).

The protein belongs to the glycosyl hydrolase 5 (cellulase A) family.

It carries out the reaction Endohydrolysis of (1-&gt;4)-beta-D-glucosidic linkages in cellulose, lichenin and cereal beta-D-glucans.. In Bacillus subtilis (strain 168), this protein is Endoglucanase (eglS).